Consider the following 320-residue polypeptide: Cytochrome f (320 aa).

A signal peptide spans 1–35 (MQTRNTFSWIKEEITRSISVSLMIYIITGASISNA). Positions 36, 56, 59, and 60 each coordinate heme. The helical transmembrane segment at 286-306 (VQGLLFFLASIVFAQIFLVLK) threads the bilayer.

The protein belongs to the cytochrome f family. The 4 large subunits of the cytochrome b6-f complex are cytochrome b6, subunit IV (17 kDa polypeptide, petD), cytochrome f and the Rieske protein, while the 4 small subunits are PetG, PetL, PetM and PetN. The complex functions as a dimer. Requires heme as cofactor.

The protein localises to the plastid. The protein resides in the chloroplast thylakoid membrane. Its function is as follows. Component of the cytochrome b6-f complex, which mediates electron transfer between photosystem II (PSII) and photosystem I (PSI), cyclic electron flow around PSI, and state transitions. This chain is Cytochrome f, found in Gossypium barbadense (Sea Island cotton).